Consider the following 619-residue polypeptide: DNA polymerase II small subunit (619 aa).

Residues E78–E122 are disordered. The span at E79–E93 shows a compositional bias: basic and acidic residues.

Belongs to the DNA polymerase delta/II small subunit family. As to quaternary structure, heterodimer of a large subunit and a small subunit.

The catalysed reaction is DNA(n) + a 2'-deoxyribonucleoside 5'-triphosphate = DNA(n+1) + diphosphate. The enzyme catalyses Exonucleolytic cleavage in the 3'- to 5'-direction to yield nucleoside 5'-phosphates.. Functionally, possesses two activities: a DNA synthesis (polymerase) and an exonucleolytic activity that degrades single-stranded DNA in the 3' to 5' direction. Has a template-primer preference which is characteristic of a replicative DNA polymerase. This Pyrococcus abyssi (strain GE5 / Orsay) protein is DNA polymerase II small subunit (polB).